Consider the following 225-residue polypeptide: Small ribosomal subunit protein eS1 (225 aa).

The protein belongs to the eukaryotic ribosomal protein eS1 family.

The polypeptide is Small ribosomal subunit protein eS1 (Methanococcus maripaludis (strain C6 / ATCC BAA-1332)).